An 81-amino-acid polypeptide reads, in one-letter code: Short neurotoxin 2 (81 aa).

The signal sequence occupies residues Met-1–Thr-21. 4 disulfides stabilise this stretch: Cys-24–Cys-43, Cys-38–Cys-60, Cys-62–Cys-73, and Cys-74–Cys-79.

The protein belongs to the three-finger toxin family. Short-chain subfamily. Type I alpha-neurotoxin sub-subfamily. As to expression, expressed by the venom gland.

Its subcellular location is the secreted. Its function is as follows. Binds to muscle nicotinic acetylcholine receptor (nAChR) and inhibit acetylcholine from binding to the receptor, thereby impairing neuromuscular transmission. This chain is Short neurotoxin 2, found in Cryptophis nigrescens (Eastern small-eyed snake).